The primary structure comprises 266 residues: Lipooligosaccharide biosynthesis protein lic2B (266 aa).

It belongs to the glycosyltransferase 25 family.

In terms of biological role, involved in extracellular lipooligosaccharide (LOS) biosynthesis and virulence expression. Involved in the synthesis of the oligosaccharide moiety of the LOS molecule by adding GalNAc. The chain is Lipooligosaccharide biosynthesis protein lic2B (lic2B) from Haemophilus influenzae.